A 393-amino-acid polypeptide reads, in one-letter code: Upstream-binding factor 1-like protein 1 (393 aa).

2 consecutive DNA-binding regions (HMG box) follow at residues 100–168 and 222–288; these read PKRP…ARFR and QKPP…DLWL. The interval 308–393 is disordered; that stretch reads KNMAMTGGPD…SSGEEIEVDV (86 aa). The span at 365 to 377 shows a compositional bias: basic and acidic residues; the sequence is EENRKKDREKEES.

It localises to the cytoplasm. The protein localises to the nucleus. Its function is as follows. Essential for proliferation of the inner cell mass and trophectodermal cells in peri-implantation development. The polypeptide is Upstream-binding factor 1-like protein 1 (Homo sapiens (Human)).